The primary structure comprises 263 residues: Lens fiber major intrinsic protein (263 aa).

The Cytoplasmic portion of the chain corresponds to 1-12; sequence MWELRSASFWRA. The helical transmembrane segment at 13 to 30 threads the bilayer; it reads IFAEFFATLFYVFFGLGA. The Extracellular portion of the chain corresponds to 31-40; that stretch reads SLRWAPGPLH. A helical transmembrane segment spans residues 41-59; that stretch reads VLQVALAFGLALATLVQAV. The Cytoplasmic segment spans residues 60-63; that stretch reads GHIS. The segment at residues 64–76 is an intramembrane region (discontinuously helical); sequence GAHVNPAVTFAFL. Residues 68–70 carry the NPA 1 motif; sequence NPA. The Cytoplasmic segment spans residues 77–85; it reads VGSQMSLLR. A helical membrane pass occupies residues 86–106; sequence AICYVVAQLLGAVAGAAVLYS. The Extracellular portion of the chain corresponds to 107 to 126; sequence VTPPAVRGNLALNTLHPGVS. Residues 127-147 traverse the membrane as a helical segment; that stretch reads VGQATIVEIFLTLQFVLCIFA. At 148–157 the chain is on the cytoplasmic side; it reads TYDERRNGRL. Residues 158 to 175 form a helical membrane-spanning segment; sequence GSVALAVGFSLTLGHLFG. The Extracellular segment spans residues 176–177; it reads MY. Positions 178–193 form an intramembrane region, discontinuously helical; it reads YTGAGMNPARSFAPAI. An NPA 2 motif is present at residues 184 to 186; it reads NPA. At 194–200 the chain is on the extracellular side; it reads LTRNFTN. The chain crosses the membrane as a helical span at residues 201–218; sequence HWVYWVGPVIGAGLGSLL. The Cytoplasmic segment spans residues 219–263; sequence YDFLLFPRLKSVSERLSILKGTRPSESNGQPEVTGEPVELKTQAL. Positions 227–237 are interaction with CALM; that stretch reads LKSVSERLSIL. 3 positions are modified to phosphoserine: Ser-235, Ser-243, and Ser-245. The disordered stretch occupies residues 240–263; it reads TRPSESNGQPEVTGEPVELKTQAL.

It belongs to the MIP/aquaporin (TC 1.A.8) family. As to quaternary structure, homotetramer; each monomer provides an independent water pore. Two homotetramers on opposing membranes can dimerize, forming a cell-cell junction. Interacts with CALM; the calcium-calmodulin/CALM complex interacts with the cytoplasmic domains of two aquaporins, leading to channel closure. Interacts with BFSP1 (via C-terminus); prevents calcium-dependent inhibition of the water channel activity. Post-translationally, subject to partial proteolytic cleavage in the eye lens core. Partial proteolysis promotes interactions between tetramers from adjoining membranes. In terms of processing, fatty acylated at Met-1 and Lys-238. The acyl modifications, in decreasing order of ion abundance, are: oleoyl (C18:1) &gt; palmitoyl (C16:0) &gt; stearoyl (C18:0) &gt; eicosenoyl (C20:1) &gt; dihomo-gamma-linolenoyl (C20:3) &gt; palmitoleoyl (C16:1) &gt; eicosadienoyl (C20:2). In terms of tissue distribution, detected in eye lens (at protein level).

It is found in the cell membrane. Its subcellular location is the cell junction. The catalysed reaction is H2O(in) = H2O(out). The water channel activity is inhibited by calcium through calmodulin/CALM. In terms of biological role, aquaporins form homotetrameric transmembrane channels, with each monomer independently mediating water transport across the plasma membrane along its osmotic gradient. Specifically expressed in lens fiber cells, this aquaporin is crucial for maintaining lens water homeostasis and transparency. Beyond water permeability, it also acts as a cell-to-cell adhesion molecule, forming thin junctions between lens fiber cells that are essential for maintaining the ordered structure and transparency of the lens. The sequence is that of Lens fiber major intrinsic protein from Ovis aries (Sheep).